The sequence spans 519 residues: 2-isopropylmalate synthase (519 aa).

Positions 12–274 (IRIFDTTLRD…DTSIHTSRIV (263 aa)) constitute a Pyruvate carboxyltransferase domain. Positions 21, 209, 211, and 245 each coordinate Mn(2+). The segment at 396-519 (RLASMTISDV…MQNKQNTALA (124 aa)) is regulatory domain.

The protein belongs to the alpha-IPM synthase/homocitrate synthase family. LeuA type 1 subfamily. In terms of assembly, homodimer. Mn(2+) serves as cofactor.

It localises to the cytoplasm. The enzyme catalyses 3-methyl-2-oxobutanoate + acetyl-CoA + H2O = (2S)-2-isopropylmalate + CoA + H(+). It functions in the pathway amino-acid biosynthesis; L-leucine biosynthesis; L-leucine from 3-methyl-2-oxobutanoate: step 1/4. Catalyzes the condensation of the acetyl group of acetyl-CoA with 3-methyl-2-oxobutanoate (2-ketoisovalerate) to form 3-carboxy-3-hydroxy-4-methylpentanoate (2-isopropylmalate). This is 2-isopropylmalate synthase from Xylella fastidiosa (strain M23).